A 985-amino-acid chain; its full sequence is Lateral signaling target protein 2 homolog (985 aa).

4 disordered regions span residues 310–453 (PLGS…ETDE), 498–520 (EYGA…PSTS), 533–640 (LRLP…SSLS), and 747–892 (DNVF…TTTA). Composition is skewed to low complexity over residues 327–348 (HPTT…TNTH), 384–393 (SLSPNSTPTA), and 401–422 (PSHS…PADW). Residues 423-453 (SDGDDEDEEDDDDDIEVEEEELDSTDDETDE) show a composition bias toward acidic residues. 2 positions are modified to phosphoserine: Ser-537 and Ser-538. Composition is skewed to basic residues over residues 563-589 (VYRH…HHQH) and 596-607 (HPHRTTRSGRKR). Low complexity-rich tracts occupy residues 629–640 (ASGDTSAASSLS) and 761–770 (NGNQANASAQ). Residues 776–785 (GSIQRNNTVD) show a composition bias toward polar residues. Ser-808 bears the Phosphoserine mark. The span at 812–866 (QESASTSTSSSQLHQEQQQLQIQVQRQRNNSVGSNTPSSASSTSSSSEQNSPVSA) shows a compositional bias: low complexity. Positions 875–885 (QSNNETQMPSS) are enriched in polar residues. The segment at 904 to 964 (DGKAPRCMSC…VCRECYVREV (61 aa)) adopts an FYVE-type zinc-finger fold. Zn(2+) is bound by residues Cys-910, Cys-913, Cys-926, Cys-929, Cys-934, Cys-937, Cys-956, and Cys-959.

Belongs to the lst-2 family.

In terms of biological role, negative regulator of epidermal growth factor receptor (EGFR) signaling. This is Lateral signaling target protein 2 homolog from Drosophila ananassae (Fruit fly).